The following is a 937-amino-acid chain: Proprotein convertase subtilisin/kexin type 6 (937 aa).

Pro residues predominate over residues 1-16 (MPPRAPPAPGPRPPPR). The tract at residues 1–22 (MPPRAPPAPGPRPPPRAAGRHG) is disordered. An N-terminal signal peptide occupies residues 1–45 (MPPRAPPAPGPRPPPRAAGRHGLSPLAPRPWRWLLLLALPAVCSA). The propeptide occupies 46–132 (LPPPRPVYTN…QQEVKRRVKR (87 aa)). The 320-residue stretch at 149 to 468 (MWYMHCADKN…FGLVDAEALV (320 aa)) folds into the Peptidase S8 domain. Active-site charge relay system residues include D186 and H227. N240 is a glycosylation site (N-linked (GlcNAc...) asparagine). The active-site Charge relay system is S401. In terms of domain architecture, P/Homo B spans 476 to 616 (AVPSQHMCVA…SLILYGTAEH (141 aa)). Positions 534-536 (RGD) match the Cell attachment site motif. The segment at 621 to 656 (FSSHQSRSRMLELSVPEQEPLKAEGPPPQAETPEEE) is disordered. FU repeat units follow at residues 660–707 (TGVC…GYFG), 711–758 (ARRC…GLYA), 762–806 (QRLC…GTYF), 810–855 (LIRC…GFYP), and 863–911 (HKVC…ETFC). The CRM (Cys-rich motif) stretch occupies residues 680 to 898 (CLNCVHFSLG…GFTQLGTSCI (219 aa)). Residues N882 and N900 are each glycosylated (N-linked (GlcNAc...) asparagine). Residues 899 to 937 (TNHTCSNADETFCEMVKSNRLCERKLFIQFCCRTCLLAG) form the PLAC domain.

It belongs to the peptidase S8 family. As to quaternary structure, the precursor protein seems to exist in the reticulum endoplasmic as both a monomer and a dimer-sized complex whereas mature form exists only as a monomer, suggesting that propeptide cleavage affects its tertiary or quaternary structure. Interacts (immature form including the propeptide) with RCN3; probably involved in the maturation and the secretion of PCSK6. It depends on Ca(2+) as a cofactor. As to expression, high expression in the anterior pituitary and in several brain regions, the atrium, and the ventricle.

In terms of biological role, serine endoprotease that processes various proproteins by cleavage at paired basic amino acids, recognizing the RXXX[KR]R consensus motif. Likely functions in the constitutive secretory pathway, with unique restricted distribution in both neuroendocrine and non-neuroendocrine tissues. The protein is Proprotein convertase subtilisin/kexin type 6 (Pcsk6) of Rattus norvegicus (Rat).